The chain runs to 1643 residues: Neurexin-3 (1643 aa).

The N-terminal stretch at methionine 1–glycine 27 is a signal peptide. The Laminin G-like 1 domain maps to leucine 28–cysteine 202. Residues leucine 28–threonine 1568 lie on the Extracellular side of the membrane. Residues asparagine 58 and asparagine 105 are each glycosylated (N-linked (GlcNAc...) asparagine). The region spanning alanine 198 to serine 235 is the EGF-like 1 domain. Cystine bridges form between cysteine 202–cysteine 213, cysteine 207–cysteine 222, and cysteine 224–cysteine 234. Laminin G-like domains lie at valine 258 to cysteine 440 and aspartate 447 to cysteine 639. Ca(2+) is bound by residues aspartate 304, leucine 321, and methionine 374. Disulfide bonds link cysteine 404/cysteine 440, cysteine 610/cysteine 639, cysteine 647/cysteine 658, cysteine 652/cysteine 667, and cysteine 669/cysteine 679. Positions serine 643–glutamate 680 constitute an EGF-like 2 domain. 2 Laminin G-like domains span residues isoleucine 685 to cysteine 857 and aspartate 871 to cysteine 1046. Residues aspartate 732 and leucine 749 each contribute to the Ca(2+) site. Asparagine 757 carries N-linked (GlcNAc...) asparagine glycosylation. Arginine 807 is a binding site for Ca(2+). 4 disulfide bridges follow: cysteine 1018/cysteine 1046, cysteine 1053/cysteine 1064, cysteine 1058/cysteine 1073, and cysteine 1075/cysteine 1085. Residues proline 1049–asparagine 1086 enclose the EGF-like 3 domain. A Laminin G-like 6 domain is found at alanine 1090–valine 1260. Ca(2+)-binding residues include aspartate 1142 and isoleucine 1159. N-linked (GlcNAc...) asparagine glycosylation is present at asparagine 1189. Positions 1211 and 1213 each coordinate Ca(2+). 2 N-linked (GlcNAc...) asparagine glycosylation sites follow: asparagine 1257 and asparagine 1301. Residues alanine 1294–alanine 1318 are disordered. Positions serine 1303–alanine 1318 are enriched in polar residues. Serine 1317 carries O-linked (Xyl...) (heparan sulfate) serine glycosylation. The chain crosses the membrane as a helical span at residues glycine 1569–methionine 1589. The Cytoplasmic segment spans residues tyrosine 1590–valine 1643. The tract at residues asparagine 1611–valine 1643 is disordered.

Belongs to the neurexin family. In terms of assembly, the laminin G-like domain 2 binds to NXPH1. Specific isoforms bind to alpha-dystroglycan. The cytoplasmic C-terminal region binds to CASK. Specific isoforms bind neuroligins NLGN1, NLGN2 and NLGN3. Interacts with CLSTN3. O-glycosylated; contains heparan sulfate. Heparan sulfate attachment is required for synapse development by mediating interactions with neuroligins. In terms of tissue distribution, expressed in the blood vessel walls (at protein level). Highly expressed in brain, lung, and pancreas; a lower level of expression is detectable in heart, placenta, liver, and kidney, whereas no expression can be observed in skeletal muscle. Isoform 4a is heart-specific.

It localises to the presynaptic cell membrane. In terms of biological role, neuronal cell surface protein that may be involved in cell recognition and cell adhesion. May mediate intracellular signaling. This is Neurexin-3 (NRXN3) from Homo sapiens (Human).